Reading from the N-terminus, the 307-residue chain is tRNA pseudouridine synthase B (307 aa).

Asp-41 acts as the Nucleophile in catalysis.

The protein belongs to the pseudouridine synthase TruB family. Type 1 subfamily.

The catalysed reaction is uridine(55) in tRNA = pseudouridine(55) in tRNA. Functionally, responsible for synthesis of pseudouridine from uracil-55 in the psi GC loop of transfer RNAs. This Prochlorococcus marinus (strain AS9601) protein is tRNA pseudouridine synthase B.